The sequence spans 217 residues: Nascent polypeptide-associated complex subunit alpha-like protein 2 (217 aa).

The tract at residues 1-81 (MSPPPAVVTE…SEKKSRKAML (81 aa)) is disordered. The span at 37–60 (PIVEDVKDDEDDDDDDEEEEDDDA) shows a compositional bias: acidic residues. Residues 70–135 (SRSEKKSRKA…AKIEDLSSQL (66 aa)) form the NAC-A/B domain. Residues 178–215 (VEARDIDLVMTQAGVSRSKAVKALKSHDGDIVSAIMEL) form the UBA domain.

This sequence belongs to the NAC-alpha family.

Functionally, may promote appropriate targeting of ribosome-nascent polypeptide complexes. This chain is Nascent polypeptide-associated complex subunit alpha-like protein 2, found in Arabidopsis thaliana (Mouse-ear cress).